A 382-amino-acid polypeptide reads, in one-letter code: Lactosylceramide 1,3-N-acetyl-beta-D-glucosaminyltransferase B (382 aa).

Topologically, residues Met1–His13 are cytoplasmic. Residues Leu14–Trp30 form a helical; Signal-anchor for type II membrane protein membrane-spanning segment. The Lumenal portion of the chain corresponds to Glu31–Thr382. Asn57, Asn112, Asn167, and Asn276 each carry an N-linked (GlcNAc...) asparagine glycan.

It belongs to the glycosyltransferase 31 family.

The protein localises to the golgi apparatus membrane. It carries out the reaction a beta-D-Gal-(1-&gt;4)-beta-D-Glc-(1&lt;-&gt;1)-Cer(d18:1(4E)) + UDP-N-acetyl-alpha-D-glucosamine = a beta-D-GlcNAc-(1-&gt;3)-beta-D-Gal-(1-&gt;4)-beta-D-Glc-(1&lt;-&gt;1)-Cer(d18:1(4E)) + UDP + H(+). The catalysed reaction is a neolactoside nLc4Cer(d18:1(4E)) + UDP-N-acetyl-alpha-D-glucosamine = a neolactoside IV(3)-beta-GlcNAc-nLc4Cer(d18:1(4E)) + UDP + H(+). It functions in the pathway protein modification; protein glycosylation. In terms of biological role, beta-1,3-N-acetylglucosaminyltransferase that plays a key role in the synthesis of lacto- or neolacto-series carbohydrate chains on glycolipids. The polypeptide is Lactosylceramide 1,3-N-acetyl-beta-D-glucosaminyltransferase B (b3gnt5b) (Danio rerio (Zebrafish)).